The following is a 274-amino-acid chain: Rhamnulose-1-phosphate aldolase (274 aa).

Glu-117 is an active-site residue. Residues His-141, His-143, and His-212 each coordinate Zn(2+).

Belongs to the aldolase class II family. RhaD subfamily. As to quaternary structure, homotetramer. The cofactor is Zn(2+).

The protein localises to the cytoplasm. It catalyses the reaction L-rhamnulose 1-phosphate = (S)-lactaldehyde + dihydroxyacetone phosphate. It functions in the pathway carbohydrate degradation; L-rhamnose degradation; glycerone phosphate from L-rhamnose: step 3/3. Its function is as follows. Catalyzes the reversible cleavage of L-rhamnulose-1-phosphate to dihydroxyacetone phosphate (DHAP) and L-lactaldehyde. This is Rhamnulose-1-phosphate aldolase from Escherichia coli O157:H7.